A 147-amino-acid polypeptide reads, in one-letter code: Transthyretin (147 aa).

The N-terminal stretch at 1-20 is a signal peptide; the sequence is MASRRLLLLCLAGLVLVTEA. Cysteine 30 carries the sulfocysteine modification. Lysine 35 provides a ligand contact to L-thyroxine. 4-carboxyglutamate is present on glutamate 62. Glutamate 74 serves as a coordination point for L-thyroxine. Residue asparagine 118 is glycosylated (N-linked (GlcNAc...) asparagine). Residue serine 137 coordinates L-thyroxine.

Belongs to the transthyretin family. As to quaternary structure, homotetramer. Dimer of dimers. In the homotetramer, subunits assemble around a central channel that can accommodate two ligand molecules. Interacts with RBP4. Sulfonation of the reactive cysteine Cys-30 enhances the stability of the native conformation of TTR, avoiding misassembly of the protein leading to amyloid formation. As to expression, detected in serum (at protein level). Detected in liver.

The protein localises to the secreted. Its function is as follows. Thyroid hormone-binding protein. Probably transports thyroxine from the bloodstream to the brain. The polypeptide is Transthyretin (TTR) (Sorex araneus (Eurasian common shrew)).